Reading from the N-terminus, the 315-residue chain is MAMYQNMLVVIDPNQDDQPALRRAVYLHQRIGGKIKAFLPIYDFSYEMTTLLSPDERTAMRQGVISQRTAWIREQAKYYLEAGVPIEIKVVWHNRPFEVIIQEVIAGSHDLVLKMAHQHDRLEAVIFTPTDWHLLRKCPSPVWMVKDQPWPEGGKALVAVNLASEEPYHNALNEKLVKETLQLAEQVNHTEVHLVGAYPVTPINIAIELPEFDPSVYNDAIRGQHLLAMKALRQKFSIDEKVTHVEKGLPEEVIPDLAEHLQAGIVVLGTVGRTGLSAAFLGNTAEQVIDHLRCDLLVIKPDEYQTPVELDDEDD.

This sequence belongs to the universal stress protein A family.

The protein resides in the cytoplasm. Functionally, required for resistance to DNA-damaging agents. The protein is Universal stress protein E (uspE) of Salmonella typhi.